The following is a 353-amino-acid chain: Nicotinate-nucleotide--dimethylbenzimidazole phosphoribosyltransferase (353 aa).

Catalysis depends on E319, which acts as the Proton acceptor.

The protein belongs to the CobT family.

The enzyme catalyses 5,6-dimethylbenzimidazole + nicotinate beta-D-ribonucleotide = alpha-ribazole 5'-phosphate + nicotinate + H(+). The protein operates within nucleoside biosynthesis; alpha-ribazole biosynthesis; alpha-ribazole from 5,6-dimethylbenzimidazole: step 1/2. Its function is as follows. Catalyzes the synthesis of alpha-ribazole-5'-phosphate from nicotinate mononucleotide (NAMN) and 5,6-dimethylbenzimidazole (DMB). This is Nicotinate-nucleotide--dimethylbenzimidazole phosphoribosyltransferase from Chlorobaculum parvum (strain DSM 263 / NCIMB 8327) (Chlorobium vibrioforme subsp. thiosulfatophilum).